The sequence spans 452 residues: MAAATLLRATPLFSGLGAGPAPLLQGLLRPLKAQALPVLCRGLAVEAKKTYVRDKPHVNVGTIGHVDHGKTTLTAAITKILAEGGGAKFKKYEEIDNAPEERARGITINAAHVEYSTAARHYAHTDCPGHADYVKNMITGTAPLDGCILVVAANDGPMPQTREHLLLARQIGVEHVVVYVNKADAVQDSEMVELVELEIRELLTEFGYKGEETPIIVGSALCALEQRDPELGLKSVQKLLDAVDTYIPVPTRDLEKPFLLPVESVYSIPGRGTVVTGTLERGILKKGDECEFLGHSKNIRTVVTGIEMFHKSLDRAEAGDNLGALVRGLKREDLRRGLVMAKPGSIQPHQKVEAQVYILTKEEGGRHKPFVSHFMPVMFSLTWDMACRIILPPGKELAMPGEDLKLTLILRQPMILEKGQRFTLRDGNRTIGTGLVTDTPAMTEEDKNIKWS.

A mitochondrion-targeting transit peptide spans 1–43; that stretch reads MAAATLLRATPLFSGLGAGPAPLLQGLLRPLKAQALPVLCRGL. Residues 55-251 enclose the tr-type G domain; sequence KPHVNVGTIG…AVDTYIPVPT (197 aa). The tract at residues 64-71 is G1; that stretch reads GHVDHGKT. D67, G69, K70, T71, and T72 together coordinate GTP. T71 is a binding site for Mg(2+). Residue K79 is modified to N6-acetyllysine. At K88 the chain carries N6-acetyllysine; alternate. An N6-succinyllysine; alternate modification is found at K88. The segment at 105–109 is G2; sequence GITIN. A G3 region spans residues 126–129; the sequence is DCPG. GTP-binding residues include N181, D184, S219, A220, and L221. A G4 region spans residues 181–184; sequence NKAD. Positions 219 to 221 are G5; that stretch reads SAL. K234 is modified (N6-succinyllysine). Position 256 is an N6-acetyllysine (K256). T278 carries the post-translational modification Phosphothreonine. K286 carries the N6-succinyllysine modification. S312 carries the phosphoserine modification. N6-acetyllysine occurs at positions 361 and 418.

This sequence belongs to the TRAFAC class translation factor GTPase superfamily. Classic translation factor GTPase family. EF-Tu/EF-1A subfamily. As to quaternary structure, interacts with NLRX1. Interacts with ATG16L1.

The protein localises to the mitochondrion. The catalysed reaction is GTP + H2O = GDP + phosphate + H(+). Its function is as follows. GTP hydrolase that promotes the GTP-dependent binding of aminoacyl-tRNA to the A-site of ribosomes during protein biosynthesis. Also plays a role in the regulation of autophagy and innate immunity. Recruits ATG5-ATG12 and NLRX1 at mitochondria and serves as a checkpoint of the RIGI-MAVS pathway. In turn, inhibits RLR-mediated type I interferon while promoting autophagy. In Bos taurus (Bovine), this protein is Elongation factor Tu, mitochondrial (TUFM).